Consider the following 1037-residue polypeptide: Multidrug resistance protein MdtF (1037 aa).

The Cytoplasmic portion of the chain corresponds to 1–9 (MANYFIDRP). A helical transmembrane segment spans residues 10-28 (VFAWVLAIIMMLAGGLAIM). Topologically, residues 29 to 339 (NLPVAQYPQI…TPFIEISIQE (311 aa)) are periplasmic. A helical membrane pass occupies residues 340 to 359 (VFKTLVEAIILVFLVMYLFL). Topologically, residues 360 to 365 (QNFRAT) are cytoplasmic. A helical membrane pass occupies residues 366–385 (IIPTIAVPVVILGTFAILSA). Over 386-391 (VGFTIN) the chain is Periplasmic. The helical transmembrane segment at 392–413 (TLTMFGMVLAIGLLVDDAIVVV) threads the bilayer. At 414 to 441 (ENVERVIAEDKLPPKEATHKSMGQIQRA) the chain is on the cytoplasmic side. Residues 442 to 460 (LVGIAVVLSAVFMPMAFMS) form a helical membrane-spanning segment. The Periplasmic segment spans residues 461–473 (GATGEIYRQFSIT). A helical membrane pass occupies residues 474 to 496 (LISSMLLSVFVAMSLTPALCATI). Topologically, residues 497–536 (LKAAPEGGHKPNALFARFNTLFEKSTQHYTDSTRSLLRCT) are cytoplasmic. Residues 537–555 (GRYMVVYLLICAGMAVLFL) traverse the membrane as a helical segment. The Periplasmic segment spans residues 556–870 (RTPTSFLPEE…SYQEALSSNQ (315 aa)). Residues 871–890 (APALYAISLVVVFLALAALY) traverse the membrane as a helical segment. The Cytoplasmic segment spans residues 891 to 896 (ESWSIP). A helical membrane pass occupies residues 897–916 (FSVMLVVPLGVVGALLATDL). Topologically, residues 917–922 (RGLSND) are periplasmic. The chain crosses the membrane as a helical span at residues 923–944 (VYFQVGLLTTIGLSAKNAILIV). Over 945–972 (EFAVEMMQKEGKTPIEAIIEAARMRLRP) the chain is Cytoplasmic. The chain crosses the membrane as a helical span at residues 973-991 (ILMTSLAFILGVLPLVISH). At 992–1004 (GAGSGAQNAVGTG) the chain is on the periplasmic side. Residues 1005–1027 (VMGGMFAATVLAIYFVPVFFVVV) traverse the membrane as a helical segment. The Cytoplasmic portion of the chain corresponds to 1028–1037 (EHLFARFKKA).

The protein belongs to the resistance-nodulation-cell division (RND) (TC 2.A.6) family. In terms of assembly, homotrimer. Part of the tripartite efflux system MdtEF-TolC, which is composed of an inner membrane transporter, MdtF, a membrane fusion protein, MdtE, and an outer membrane component, TolC. The complex forms a large protein conduit and can translocate molecules across both the inner and outer membranes.

It localises to the cell inner membrane. Part of the tripartite efflux system MdtEF-TolC, which confers resistance to compounds such as rhodamine 6G, erythromycin, doxorubicin, ethidium bromide, TPP, SDS, deoxycholate, crystal violet and benzalkonium. In Escherichia coli (strain K12), this protein is Multidrug resistance protein MdtF (mdtF).